A 182-amino-acid polypeptide reads, in one-letter code: Ribosome maturation factor RimP (182 aa).

It belongs to the RimP family.

It localises to the cytoplasm. In terms of biological role, required for maturation of 30S ribosomal subunits. In Chloroherpeton thalassium (strain ATCC 35110 / GB-78), this protein is Ribosome maturation factor RimP.